The following is a 252-amino-acid chain: uncharacterized protein (252 aa).

The Clp R domain maps to 96–238; it reads FRRFTPRARN…ITTLASLTGA (143 aa). Repeat regions lie at residues 99–164 and 172–238; these read FTPR…PAVT and FSGP…LTGA.

The protein belongs to the ClpA/ClpB family. ClpC subfamily.

This is an uncharacterized protein from Mycobacterium bovis (strain ATCC BAA-935 / AF2122/97).